We begin with the raw amino-acid sequence, 303 residues long: GTPase Era (303 aa).

The 170-residue stretch at 7-176 folds into the Era-type G domain; it reads KSGFVAIIGR…LDNVVSHLDE (170 aa). Residues 15-22 form a G1 region; the sequence is GRPNVGKS. GTP is bound at residue 15-22; that stretch reads GRPNVGKS. Residues 41-45 form a G2 region; that stretch reads QTTRN. A G3 region spans residues 62 to 65; that stretch reads DTPG. Residues 62-66 and 125-128 each bind GTP; these read DTPGV and NKVD. The tract at residues 125–128 is G4; it reads NKVD. The tract at residues 155-157 is G5; it reads ISA. In terms of domain architecture, KH type-2 spans 207-284; the sequence is TRQEVPHSVA…FLETWVKVEP (78 aa).

It belongs to the TRAFAC class TrmE-Era-EngA-EngB-Septin-like GTPase superfamily. Era GTPase family. In terms of assembly, monomer.

Its subcellular location is the cytoplasm. The protein localises to the cell membrane. An essential GTPase that binds both GDP and GTP, with rapid nucleotide exchange. Plays a role in 16S rRNA processing and 30S ribosomal subunit biogenesis and possibly also in cell cycle regulation and energy metabolism. The polypeptide is GTPase Era (Leuconostoc citreum (strain KM20)).